The primary structure comprises 216 residues: MKLNVNPTRMELTKLKKRLTTATRGHKLLKDKQDELMRRFIGMIKKNNELRKDVEKELEGSFKDFLMASAVMSPEFLEEAVAYPKESISVDVKKQNIMSVNVPVFDFKRKLEGDKGSIFPYGFANTSAELDGAIEKLYGILPKLLELAKVEKACQLMADEIEKTRRRVNALEYMTIPQLEETIRFIQMKLDENERSTVTRLMKIKSMMEEKQSNMV.

The protein belongs to the V-ATPase D subunit family.

Its function is as follows. Produces ATP from ADP in the presence of a proton gradient across the membrane. This Clostridium botulinum (strain Loch Maree / Type A3) protein is V-type ATP synthase subunit D.